The following is a 741-amino-acid chain: D-(-)-3-hydroxybutyrate oligomer hydrolase (741 aa).

A signal peptide spans 1-23; sequence MKTIQGKSPGRWYSRGMLLAAMA. A disordered region spans residues 45-68; the sequence is NGNAGGNGNNNGNNNGNTVSNTKP. The active-site Charge relay system is the serine 338.

This sequence belongs to the D-(-)-3-hydroxybutyrate oligomer hydrolase family.

Its subcellular location is the secreted. The catalysed reaction is (3R)-hydroxybutanoate dimer + H2O = 2 (R)-3-hydroxybutanoate + H(+). It functions in the pathway lipid metabolism; butanoate metabolism. Its function is as follows. Participates in the degradation of poly-3-hydroxybutyrate (PHB). It works downstream of poly(3-hydroxybutyrate) depolymerase, hydrolyzing D(-)-3-hydroxybutyrate oligomers of various length (3HB-oligomers) into 3HB-monomers. The polypeptide is D-(-)-3-hydroxybutyrate oligomer hydrolase (Ralstonia pickettii (Burkholderia pickettii)).